The sequence spans 221 residues: MAQQSLIYSFVARGTVILVEFTDFKGNFTSIAAQCLQKLPSSNNKFTYNCDGHTFNYLVENGFTYCVVAVDSAGRQIPMAFLERVKEDFNKRYGGGKAATAQANSLNKEFGSKLKEHMQYCMDHPDEISKLAKVKAQVSEVKGVMMENIEKVLDRGEKIELLVDKTENLRSQAQDFRTQGTQMRRKMWFQNMKIKLIVLAIIIALILIIILSICGGFNCGK.

The Cytoplasmic portion of the chain corresponds to 1–196 (MAQQSLIYSF…MWFQNMKIKL (196 aa)). The Longin domain occupies 10–114 (FVARGTVILV…SLNKEFGSKL (105 aa)). The 61-residue stretch at 130 to 190 (KLAKVKAQVS…TQMRRKMWFQ (61 aa)) folds into the v-SNARE coiled-coil homology domain. A helical; Anchor for type IV membrane protein transmembrane segment spans residues 197–217 (IVLAIIIALILIIILSICGGF). Residues 218–221 (NCGK) lie on the Vesicular side of the membrane.

This sequence belongs to the synaptobrevin family. In terms of tissue distribution, highly expressed in stems and roots. Detected in flowers and leaves.

The protein resides in the cell membrane. The protein localises to the early endosome membrane. Functionally, involved in the targeting and/or fusion of transport vesicles to their target membrane. This chain is Vesicle-associated membrane protein 722, found in Arabidopsis thaliana (Mouse-ear cress).